A 347-amino-acid polypeptide reads, in one-letter code: Probable dual-specificity RNA methyltransferase RlmN (347 aa).

The active-site Proton acceptor is Glu94. One can recognise a Radical SAM core domain in the interval 100-334 (TETRTTACVS…AKVRHSRGKD (235 aa)). Cys107 and Cys339 are disulfide-bonded. Cys114, Cys118, and Cys121 together coordinate [4Fe-4S] cluster. S-adenosyl-L-methionine contacts are provided by residues 165–166 (GE), Ser197, 220–222 (SLH), and Asn296. Cys339 serves as the catalytic S-methylcysteine intermediate.

This sequence belongs to the radical SAM superfamily. RlmN family. Requires [4Fe-4S] cluster as cofactor.

The protein localises to the cytoplasm. It catalyses the reaction adenosine(2503) in 23S rRNA + 2 reduced [2Fe-2S]-[ferredoxin] + 2 S-adenosyl-L-methionine = 2-methyladenosine(2503) in 23S rRNA + 5'-deoxyadenosine + L-methionine + 2 oxidized [2Fe-2S]-[ferredoxin] + S-adenosyl-L-homocysteine. The catalysed reaction is adenosine(37) in tRNA + 2 reduced [2Fe-2S]-[ferredoxin] + 2 S-adenosyl-L-methionine = 2-methyladenosine(37) in tRNA + 5'-deoxyadenosine + L-methionine + 2 oxidized [2Fe-2S]-[ferredoxin] + S-adenosyl-L-homocysteine. Specifically methylates position 2 of adenine 2503 in 23S rRNA and position 2 of adenine 37 in tRNAs. The chain is Probable dual-specificity RNA methyltransferase RlmN from Flavobacterium psychrophilum (strain ATCC 49511 / DSM 21280 / CIP 103535 / JIP02/86).